A 235-amino-acid polypeptide reads, in one-letter code: Orotidine 5'-phosphate decarboxylase (235 aa).

Substrate contacts are provided by residues Asp-17, Lys-39, 66–75 (DLKLHDIGNT), Thr-121, Arg-182, Gln-191, Gly-211, and Arg-212. Lys-68 serves as the catalytic Proton donor.

This sequence belongs to the OMP decarboxylase family. Type 1 subfamily. Homodimer.

The catalysed reaction is orotidine 5'-phosphate + H(+) = UMP + CO2. It participates in pyrimidine metabolism; UMP biosynthesis via de novo pathway; UMP from orotate: step 2/2. In terms of biological role, catalyzes the decarboxylation of orotidine 5'-monophosphate (OMP) to uridine 5'-monophosphate (UMP). In Rhodopseudomonas palustris (strain BisB5), this protein is Orotidine 5'-phosphate decarboxylase.